A 203-amino-acid polypeptide reads, in one-letter code: Probable proteasome subunit beta type-4 (203 aa).

This sequence belongs to the peptidase T1B family. In terms of assembly, the 26S proteasome consists of a 20S proteasome core and two 19S regulatory subunits. The 20S proteasome core is composed of 28 subunits that are arranged in four stacked rings, resulting in a barrel-shaped structure. The two end rings are each formed by seven alpha subunits, and the two central rings are each formed by seven beta subunits. The catalytic chamber with the active sites is on the inside of the barrel.

The protein resides in the cytoplasm. It localises to the nucleus. Non-catalytic component of the proteasome, a multicatalytic proteinase complex which is characterized by its ability to cleave peptides with Arg, Phe, Tyr, Leu, and Glu adjacent to the leaving group at neutral or slightly basic pH. The proteasome has an ATP-dependent proteolytic activity. In Neurospora crassa (strain ATCC 24698 / 74-OR23-1A / CBS 708.71 / DSM 1257 / FGSC 987), this protein is Probable proteasome subunit beta type-4 (pcb-4).